The chain runs to 685 residues: Galactocerebrosidase (685 aa).

The signal sequence occupies residues 1–42; it reads MAEWLLSASWQRRAKAMTAAAGSAGRAAVPLLLCALLAPGGA. Threonine 109 lines the substrate pocket. The N-linked (GlcNAc...) asparagine glycan is linked to asparagine 143. Substrate is bound by residues tryptophan 151 and asparagine 197. Glutamate 198 functions as the Proton donor/acceptor in the catalytic mechanism. Glutamate 274 (nucleophile) is an active-site residue. Cysteine 287 and cysteine 394 are oxidised to a cystine. Residue asparagine 379 is glycosylated (N-linked (GlcNAc...) asparagine). Residue arginine 396 participates in substrate binding. N-linked (GlcNAc...) asparagine glycosylation is found at asparagine 403, asparagine 556, asparagine 559, and asparagine 602.

It belongs to the glycosyl hydrolase 59 family. Detected in urine. Detected in testis, brain and placenta (at protein level). Detected in kidney and liver.

It is found in the lysosome. It catalyses the reaction a beta-D-galactosyl-(1&lt;-&gt;1')-N-acylsphing-4-enine + H2O = an N-acylsphing-4-enine + D-galactose. It carries out the reaction beta-D-galactosyl-(1&lt;-&gt;1)-sphing-4-enine + H2O = sphing-4-enine + D-galactose. The enzyme catalyses a D-galactosylceramide + H2O = an N-acyl-sphingoid base + D-galactose. Functionally, hydrolyzes the galactose ester bonds of glycolipids such as galactosylceramide and galactosylsphingosine. Enzyme with very low activity responsible for the lysosomal catabolism of galactosylceramide, a major lipid in myelin, kidney and epithelial cells of small intestine and colon. This Homo sapiens (Human) protein is Galactocerebrosidase.